The chain runs to 182 residues: MSFKGTTVIAIKKNGKTVVAADGQVTFGHTVLKSNAIKIRKLLNGKILAGFAGSTSDAITLFEKFEEKIKAKGDGLIDIKRAAVDLAKDWRSDKILHKLEAMMLVADSNNILLISGTGDVVEPEEDVISIGSGGNYAYSAALAYMENKKLSAFEVALRSLKIAARVCIYTNSNIVLEEIENE.

Residue T6 is part of the active site. Positions 164, 167, and 170 each coordinate Na(+).

It belongs to the peptidase T1B family. HslV subfamily. A double ring-shaped homohexamer of HslV is capped on each side by a ring-shaped HslU homohexamer. The assembly of the HslU/HslV complex is dependent on binding of ATP.

The protein resides in the cytoplasm. The catalysed reaction is ATP-dependent cleavage of peptide bonds with broad specificity.. Allosterically activated by HslU binding. Functionally, protease subunit of a proteasome-like degradation complex believed to be a general protein degrading machinery. The sequence is that of ATP-dependent protease subunit HslV from Borreliella burgdorferi (strain ATCC 35210 / DSM 4680 / CIP 102532 / B31) (Borrelia burgdorferi).